The primary structure comprises 442 residues: Proline--tRNA ligase (442 aa).

It belongs to the class-II aminoacyl-tRNA synthetase family. ProS type 2 subfamily. In terms of assembly, homodimer.

The protein localises to the cytoplasm. It catalyses the reaction tRNA(Pro) + L-proline + ATP = L-prolyl-tRNA(Pro) + AMP + diphosphate. In terms of biological role, catalyzes the attachment of proline to tRNA(Pro) in a two-step reaction: proline is first activated by ATP to form Pro-AMP and then transferred to the acceptor end of tRNA(Pro). This chain is Proline--tRNA ligase, found in Chelativorans sp. (strain BNC1).